The sequence spans 148 residues: Oleosin 1 (148 aa).

Ala2 carries the N-acetylalanine modification. The polar stretch occupies residues 2 to 28 (ADQHFQQPLHFQGSYGQQQPRSYQVAK). Residues 29 to 148 (AATAVTAGGS…HVPSGQQQSS (120 aa)) form a hydrophobic region. The next 2 helical transmembrane spans lie at 37-57 (GSLLVLSGLVLAGTVIALTIA) and 81-101 (GFLTSGGFGVAAVTVLSWIYK).

Belongs to the oleosin family.

The protein resides in the lipid droplet. It localises to the membrane. Its function is as follows. May have a structural role to stabilize the lipid body during desiccation of the seed by preventing coalescence of the oil. Probably interacts with both lipid and phospholipid moieties of lipid bodies. May also provide recognition signals for specific lipase anchorage in lipolysis during seedling growth. In Prunus dulcis (Almond), this protein is Oleosin 1 (OLE1).